A 190-amino-acid polypeptide reads, in one-letter code: RNA pyrophosphohydrolase (190 aa).

Positions 6–149 constitute a Nudix hydrolase domain; the sequence is GYRPNVGIVL…KRGVYARALC (144 aa). The short motif at 38–59 is the Nudix box element; sequence GGMHSDETPVEAMYRELNEEIG.

It belongs to the Nudix hydrolase family. RppH subfamily. The cofactor is a divalent metal cation.

Its function is as follows. Accelerates the degradation of transcripts by removing pyrophosphate from the 5'-end of triphosphorylated RNA, leading to a more labile monophosphorylated state that can stimulate subsequent ribonuclease cleavage. The polypeptide is RNA pyrophosphohydrolase (Xylella fastidiosa (strain M12)).